The sequence spans 360 residues: Photosystem II protein D1 3 (360 aa).

3 helical membrane passes run 29–46, 118–133, and 142–156; these read YVGW…AATI, HFLI…EWEL, and WICV…AATA. His118 serves as a coordination point for chlorophyll a. Tyr126 is a binding site for pheophytin a. Asp170 and Glu189 together coordinate [CaMn4O5] cluster. A helical membrane pass occupies residues 197-218; it reads FHQLGVAGVFGGALFSAMHGSL. Chlorophyll a is bound at residue His198. Residues His215 and 264–265 contribute to the a quinone site; that span reads SF. His215 lines the Fe cation pocket. Fe cation is bound at residue His272. Residues 274 to 288 traverse the membrane as a helical segment; that stretch reads FLAAWPVIGIWFTAL. [CaMn4O5] cluster contacts are provided by His332, Glu333, Asp342, and Ala344. Residues 345–360 constitute a propeptide that is removed on maturation; it reads SAESAPVAMIAPSING.

The protein belongs to the reaction center PufL/M/PsbA/D family. In terms of assembly, PSII is composed of 1 copy each of membrane proteins PsbA, PsbB, PsbC, PsbD, PsbE, PsbF, PsbH, PsbI, PsbJ, PsbK, PsbL, PsbM, PsbT, PsbX, PsbY, PsbZ, Psb30/Ycf12, peripheral proteins PsbO, CyanoQ (PsbQ), PsbU, PsbV and a large number of cofactors. It forms dimeric complexes. Precursor protein interacts with Ycf48. It depends on The D1/D2 heterodimer binds P680, chlorophylls that are the primary electron donor of PSII, and subsequent electron acceptors. It shares a non-heme iron and each subunit binds pheophytin, quinone, additional chlorophylls, carotenoids and lipids. D1 provides most of the ligands for the Mn4-Ca-O5 cluster of the oxygen-evolving complex (OEC). There is also a Cl(-1) ion associated with D1 and D2, which is required for oxygen evolution. The PSII complex binds additional chlorophylls, carotenoids and specific lipids. as a cofactor. In terms of processing, C-terminally processed by CtpA; processing is essential to allow assembly of the oxygen-evolving complex and thus photosynthetic growth. Post-translationally, tyr-161 forms a radical intermediate that is referred to as redox-active TyrZ, YZ or Y-Z.

Its subcellular location is the cellular thylakoid membrane. The catalysed reaction is 2 a plastoquinone + 4 hnu + 2 H2O = 2 a plastoquinol + O2. Its function is as follows. Photosystem II (PSII) is a light-driven water:plastoquinone oxidoreductase that uses light energy to abstract electrons from H(2)O, generating O(2) and a proton gradient subsequently used for ATP formation. It consists of a core antenna complex that captures photons, and an electron transfer chain that converts photonic excitation into a charge separation. The D1/D2 (PsbA/PsbD) reaction center heterodimer binds P680, the primary electron donor of PSII as well as several subsequent electron acceptors. The protein is Photosystem II protein D1 3 of Thermosynechococcus vestitus (strain NIES-2133 / IAM M-273 / BP-1).